The sequence spans 1009 residues: Protein-tyrosine kinase 2-beta (1009 aa).

The FERM domain occupies 39–359 (RILKVCFYSN…GYCRLQGEHK (321 aa)). Phosphoserine occurs at positions 361, 375, and 399. At tyrosine 402 the chain carries Phosphotyrosine; by autocatalysis. The Protein kinase domain occupies 425–683 (VVLNRILGEG…ELVCSLSDIY (259 aa)). ATP-binding positions include 431–439 (LGEGFFGEV), lysine 457, and 503–509 (ELYPYGE). Aspartate 549 functions as the Proton acceptor in the catalytic mechanism. Residues tyrosine 579, tyrosine 580, and tyrosine 722 each carry the phosphotyrosine modification. Positions 702 to 725 (PKILEPTAFQEPPPKPSRPKYKHP) are disordered. Phosphoserine is present on serine 762. Threonine 765 carries the phosphothreonine modification. Residues 801-1009 (KIKMRQVLDR…VANLAHPPAE (209 aa)) form an interaction with TGFB1I1 region. Tyrosine 834 is modified (phosphotyrosine). A Phosphoserine modification is found at serine 839. Threonine 842 is modified (phosphothreonine). Tyrosine 849 is modified (phosphotyrosine). Serine 866 bears the Phosphoserine mark. The focal adhesion targeting (FAT) stretch occupies residues 868-1009 (QPTANLDRTD…VANLAHPPAE (142 aa)). A Phosphotyrosine modification is found at tyrosine 881.

It belongs to the protein kinase superfamily. Tyr protein kinase family. FAK subfamily. Homodimer, or homooligomer. Interacts with NPHP1, ASAP1, ASAP2, ARHGAP26, SKAP2 and TGFB1I1. The Tyr-402 phosphorylated form interacts with SRC (via SH2 domain) and SRC family members. Forms a signaling complex with EPHA1, LCK and phosphatidylinositol 3-kinase; upon activation by EFNA1. Interacts with GRB2 (via SH2 domain). Interacts with P53/TP53 and MDM2. Interacts with MYLK. Interacts with BCAR1. Interacts with RB1CC1. Interacts with RHOU. Interacts with VAV1. Interacts with PDPK1. Interacts with LPXN and PTPN12. Interacts with SIRPA and SH2D3C. Interacts (hypophosphorylated) with PXN. Interacts with ARHGAP10. Interacts with KCNA2. In terms of processing, phosphorylated on tyrosine residues in response to various stimuli that elevate the intracellular calcium concentration; this activation is indirect and may be mediated by production of reactive oxygen species (ROS). Tyr-402 is the major autophosphorylation site, but other kinases can also phosphorylate Tyr-402. Autophosphorylation occurs in trans, i.e. one subunit of the dimeric receptor phosphorylates tyrosine residues on the other subunit. Phosphorylation at Tyr-402 promotes interaction with SRC and SRC family members, leading to phosphorylation at Tyr-579; Tyr-580 and Tyr-881. Phosphorylation at Tyr-881 is important for interaction with GRB2. Phosphorylated on tyrosine residues upon activation of FGR and PKC. Recruitment by NPHP1 to cell matrix adhesions initiates Tyr-402 phosphorylation. In monocytes, adherence to substrata is required for tyrosine phosphorylation and kinase activation. Angiotensin II, thapsigargin and L-alpha-lysophosphatidic acid (LPA) also induce autophosphorylation and increase kinase activity. Phosphorylation by MYLK promotes ITGB2 activation and is thus essential to trigger neutrophil transmigration during lung injury. Dephosphorylated by PTPN12. As to expression, highly expressed in pulmonary vein endothelial cells, lung and brain (at protein level). Isoform 1 is expressed at high levels in the brain (hippocampus, cerebral cortex and olfactory bulb) and poorly in the spleen and other tissues, whereas isoforms 2 and 3 are expressed in the spleen and brain (highest in cerebellum).

The protein resides in the cytoplasm. The protein localises to the perinuclear region. It localises to the cell membrane. Its subcellular location is the cell projection. It is found in the lamellipodium. The protein resides in the cell cortex. The protein localises to the nucleus. It localises to the cell junction. Its subcellular location is the focal adhesion. It carries out the reaction L-tyrosyl-[protein] + ATP = O-phospho-L-tyrosyl-[protein] + ADP + H(+). With respect to regulation, activated in response to stimuli that lead to increased intracellular Ca(2+) levels; this activation is indirect and may be mediated by calcium-mediated production of reactive oxygen species (ROS). Activated by autophosphorylation at Tyr-402; this creates a binding site for SRC family kinases and leads to phosphorylation at additional tyrosine residues. Phosphorylation at Tyr-402, Tyr-579 and Tyr-580 is required for optimal kinase activity. Non-receptor protein-tyrosine kinase that regulates reorganization of the actin cytoskeleton, cell polarization, cell migration, adhesion, spreading and bone remodeling. Plays a role in the regulation of the humoral immune response, and is required for normal levels of marginal B-cells in the spleen and normal migration of splenic B-cells. Required for normal macrophage polarization and migration towards sites of inflammation. Regulates cytoskeleton rearrangement and cell spreading in T-cells, and contributes to the regulation of T-cell responses. Promotes osteoclastic bone resorption; this requires both PTK2B/PYK2 and SRC. May inhibit differentiation and activity of osteoprogenitor cells. Functions in signaling downstream of integrin and collagen receptors, immune receptors, G-protein coupled receptors (GPCR), cytokine, chemokine and growth factor receptors, and mediates responses to cellular stress. Forms multisubunit signaling complexes with SRC and SRC family members upon activation; this leads to the phosphorylation of additional tyrosine residues, creating binding sites for scaffold proteins, effectors and substrates. Regulates numerous signaling pathways. Promotes activation of phosphatidylinositol 3-kinase and of the AKT1 signaling cascade. Promotes activation of NOS3. Regulates production of the cellular messenger cGMP. Promotes activation of the MAP kinase signaling cascade, including activation of MAPK1/ERK2, MAPK3/ERK1 and MAPK8/JNK1. Promotes activation of Rho family GTPases, such as RHOA and RAC1. Recruits the ubiquitin ligase MDM2 to P53/TP53 in the nucleus, and thereby regulates P53/TP53 activity, P53/TP53 ubiquitination and proteasomal degradation. Acts as a scaffold, binding to both PDPK1 and SRC, thereby allowing SRC to phosphorylate PDPK1 at 'Tyr-9, 'Tyr-373', and 'Tyr-376'. Promotes phosphorylation of NMDA receptors by SRC family members, and thereby contributes to the regulation of NMDA receptor ion channel activity and intracellular Ca(2+) levels. May also regulate potassium ion transport by phosphorylation of potassium channel subunits. Phosphorylates SRC; this increases SRC kinase activity. Phosphorylates ASAP1, NPHP1, KCNA2 and SHC1. Promotes phosphorylation of ASAP2, RHOU and PXN; this requires both SRC and PTK2/PYK2. The polypeptide is Protein-tyrosine kinase 2-beta (Ptk2b) (Rattus norvegicus (Rat)).